The following is a 571-amino-acid chain: Membrane protein insertase YidC (571 aa).

A helical membrane pass occupies residues 4–24; it reads TRVFLIFAWLMVAVLLWMEWS. The disordered stretch occupies residues 29–76; the sequence is APTPAPTTTSAPAAAQSVPGATPGSVPNAQVPGAPGQAAVQAQASATP. Composition is skewed to low complexity over residues 34–43 and 57–76; these read PTTTSAPAAA and AQVP…SATP. A run of 4 helical transmembrane segments spans residues 369–389, 440–460, 483–503, and 518–538; these read LVGN…LVLY, GGCL…WVLV, YFIL…LTPA, and PLVF…YWVV.

Belongs to the OXA1/ALB3/YidC family. Type 1 subfamily. Interacts with the Sec translocase complex via SecD. Specifically interacts with transmembrane segments of nascent integral membrane proteins during membrane integration.

It is found in the cell inner membrane. Its function is as follows. Required for the insertion and/or proper folding and/or complex formation of integral membrane proteins into the membrane. Involved in integration of membrane proteins that insert both dependently and independently of the Sec translocase complex, as well as at least some lipoproteins. Aids folding of multispanning membrane proteins. The chain is Membrane protein insertase YidC from Stenotrophomonas maltophilia (strain R551-3).